Here is a 271-residue protein sequence, read N- to C-terminus: Elongation factor Ts (271 aa).

The tract at residues 76–79 (TDFV) is involved in Mg(2+) ion dislocation from EF-Tu.

This sequence belongs to the EF-Ts family.

It is found in the cytoplasm. In terms of biological role, associates with the EF-Tu.GDP complex and induces the exchange of GDP to GTP. It remains bound to the aminoacyl-tRNA.EF-Tu.GTP complex up to the GTP hydrolysis stage on the ribosome. This Mycobacterium ulcerans (strain Agy99) protein is Elongation factor Ts.